The sequence spans 263 residues: 5'-nucleotidase SurE (263 aa).

Residues D21, D22, S52, and N105 each contribute to the a divalent metal cation site.

This sequence belongs to the SurE nucleotidase family. A divalent metal cation is required as a cofactor.

The protein resides in the cytoplasm. It catalyses the reaction a ribonucleoside 5'-phosphate + H2O = a ribonucleoside + phosphate. Its function is as follows. Nucleotidase that shows phosphatase activity on nucleoside 5'-monophosphates. This chain is 5'-nucleotidase SurE, found in Vibrio cholerae serotype O1 (strain ATCC 39541 / Classical Ogawa 395 / O395).